Consider the following 544-residue polypeptide: Flagellar hook-associated protein 1 (544 aa).

It belongs to the flagella basal body rod proteins family.

Its subcellular location is the secreted. It is found in the bacterial flagellum. The sequence is that of Flagellar hook-associated protein 1 (flgK) from Buchnera aphidicola subsp. Schizaphis graminum (strain Sg).